Here is a 375-residue protein sequence, read N- to C-terminus: E3 ubiquitin-protein ligase FANCL (375 aa).

Positions 104–294 (QPPSCSFCKD…KDVLEIDFPA (191 aa)) are UBC-RWD region (URD). The segment at 307–363 (CGICYARHLNGAIPDQVCNNPQCGQPFHEICLYEWLRGLSTSRQSFNVFFGDCPYCS) adopts an RING-type; degenerate zinc-finger fold.

As to quaternary structure, belongs to the multisubunit FA complex composed of FANCA, FANCB, FANCC, FANCE, FANCF, FANCG, FANCL/PHF9 and FANCM. In complex with FANCF, FANCA and FANCG, but not with FANCC, nor FANCE, interacts with HES1; this interaction may be essential for the stability and nuclear localization of FA core complex proteins. Interacts with FANCI. Interacts with GGN. Interacts (via the RING-type zinc finger) with UBE2T and UBE2W. In terms of processing, the RING-type zinc finger domain is monoubiquitinated in the presence of UBE2T and UBE2W.

Its subcellular location is the cytoplasm. It is found in the nucleus. The enzyme catalyses S-ubiquitinyl-[E2 ubiquitin-conjugating enzyme]-L-cysteine + [acceptor protein]-L-lysine = [E2 ubiquitin-conjugating enzyme]-L-cysteine + N(6)-ubiquitinyl-[acceptor protein]-L-lysine.. It participates in protein modification; protein ubiquitination. In terms of biological role, ubiquitin ligase protein that mediates monoubiquitination of FANCD2, a key step in the DNA damage pathway. Also mediates monoubiquitination of FANCI. May stimulate the ubiquitin release from UBE2W. May be required for proper primordial germ cell proliferation in the embryonic stage, whereas it is probably not needed for spermatogonial proliferation after birth. The protein is E3 ubiquitin-protein ligase FANCL (Fancl) of Mus musculus (Mouse).